Reading from the N-terminus, the 394-residue chain is Aspergillopepsin-1 (394 aa).

A signal peptide spans 1-20 (MVVFSKVTAAVFGLATIASA). A propeptide spans 21-69 (APAPPTRKGFTVQQQARPAQKKQVNLPAMYAHALTKFGGSVPESVKVAA) (activation peptide). In terms of domain architecture, Peptidase A1 spans 85–391 (YLTPVNVGGT…DSEGPRLGFA (307 aa)). Residues Asp101 and Asp283 contribute to the active site. An intrachain disulfide couples Cys319 to Cys354.

The protein belongs to the peptidase A1 family. Monomer.

The protein resides in the secreted. It catalyses the reaction Hydrolysis of proteins with broad specificity. Generally favors hydrophobic residues in P1 and P1', but also accepts Lys in P1, which leads to activation of trypsinogen. Does not clot milk.. Secreted aspartic endopeptidase that allows assimilation of proteinaceous substrates. The scissile peptide bond is attacked by a nucleophilic water molecule activated by two aspartic residues in the active site. Shows a broad primary substrate specificity. Favors hydrophobic residues at the P1 and P1' positions, but also accepts a lysine residue in the P1 position, leading to the activation of trypsinogen and chymotrypsinogen A. The polypeptide is Aspergillopepsin-1 (pepA) (Aspergillus clavatus (strain ATCC 1007 / CBS 513.65 / DSM 816 / NCTC 3887 / NRRL 1 / QM 1276 / 107)).